We begin with the raw amino-acid sequence, 118 residues long: Non-specific lipid-transfer protein 3 (118 aa).

The first 25 residues, 1–25 (MARSMNLACVALVMCMVVIAPMAEA), serve as a signal peptide directing secretion. Disulfide bonds link Cys29-Cys76, Cys39-Cys53, Cys54-Cys99, and Cys74-Cys113.

The protein belongs to the plant LTP family.

Its function is as follows. Plant non-specific lipid-transfer proteins transfer phospholipids as well as galactolipids across membranes. May play a role in wax or cutin deposition in the cell walls of expanding epidermal cells and certain secretory tissues. The protein is Non-specific lipid-transfer protein 3 of Lens culinaris (Lentil).